The primary structure comprises 373 residues: 3 beta-hydroxysteroid dehydrogenase/Delta 5--&gt;4-isomerase (373 aa).

The active-site Proton acceptor is Tyr155. Lys159 contributes to the NAD(+) binding site. A helical membrane pass occupies residues 288–308 (ISLEYWLAFLLEIVSFLLSPI).

The protein belongs to the 3-beta-HSD family.

It is found in the endoplasmic reticulum membrane. Its subcellular location is the mitochondrion membrane. The enzyme catalyses a 3beta-hydroxy-Delta(5)-steroid + NAD(+) = a 3-oxo-Delta(5)-steroid + NADH + H(+). It carries out the reaction a 3-oxo-Delta(5)-steroid = a 3-oxo-Delta(4)-steroid. The protein operates within lipid metabolism; steroid biosynthesis. Its function is as follows. 3-beta-HSD is a bifunctional enzyme, that catalyzes the oxidative conversion of Delta(5)-ene-3-beta-hydroxy steroid, and the oxidative conversion of ketosteroids. The 3-beta-HSD enzymatic system plays a crucial role in the biosynthesis of all classes of hormonal steroids. In Canis lupus familiaris (Dog), this protein is 3 beta-hydroxysteroid dehydrogenase/Delta 5--&gt;4-isomerase (HSD3B).